The following is a 34-amino-acid chain: Mytilin-B (34 aa).

Cystine bridges form between C2–C27, C6–C29, C10–C31, and C15–C34.

The protein resides in the secreted. In terms of biological role, has antibacterial and antiviral activity. In Mytilus edulis (Blue mussel), this protein is Mytilin-B.